Reading from the N-terminus, the 336-residue chain is Ornithine carbamoyltransferase, catabolic (336 aa).

Carbamoyl phosphate contacts are provided by residues 57-60 (STRT), glutamine 84, arginine 108, and 135-138 (HPTQ). L-ornithine-binding positions include asparagine 168, aspartate 232, and 236–237 (SM). Residues 274–275 (CL) and arginine 321 contribute to the carbamoyl phosphate site.

This sequence belongs to the aspartate/ornithine carbamoyltransferase superfamily. OTCase family.

Its subcellular location is the cytoplasm. It catalyses the reaction carbamoyl phosphate + L-ornithine = L-citrulline + phosphate + H(+). The protein operates within amino-acid degradation; L-arginine degradation via ADI pathway; carbamoyl phosphate from L-arginine: step 2/2. Its function is as follows. Reversibly catalyzes the transfer of the carbamoyl group from carbamoyl phosphate (CP) to the N(epsilon) atom of ornithine (ORN) to produce L-citrulline. The sequence is that of Ornithine carbamoyltransferase, catabolic from Burkholderia mallei (strain ATCC 23344).